We begin with the raw amino-acid sequence, 306 residues long: CRISPR-associated endonuclease Cas1 (306 aa).

Mn(2+) is bound by residues glutamate 143, histidine 210, and aspartate 223.

It belongs to the CRISPR-associated endonuclease Cas1 family. Homodimer, forms a heterotetramer with a Cas2 homodimer. Requires Mg(2+) as cofactor. The cofactor is Mn(2+).

CRISPR (clustered regularly interspaced short palindromic repeat), is an adaptive immune system that provides protection against mobile genetic elements (viruses, transposable elements and conjugative plasmids). CRISPR clusters contain spacers, sequences complementary to antecedent mobile elements, and target invading nucleic acids. CRISPR clusters are transcribed and processed into CRISPR RNA (crRNA). Acts as a dsDNA endonuclease. Involved in the integration of spacer DNA into the CRISPR cassette. The polypeptide is CRISPR-associated endonuclease Cas1 (Geobacter sulfurreducens (strain ATCC 51573 / DSM 12127 / PCA)).